A 151-amino-acid chain; its full sequence is Proteolipid protein 2 (151 aa).

The region spanning 19–137 is the MARVEL domain; it reads FSRTKKGILL…DAYITFPLKQ (119 aa). The next 4 membrane-spanning stretches (helical) occupy residues 25 to 45, 48 to 68, 85 to 105, and 112 to 132; these read GILL…FSAS, AYSS…VFYM, FFRS…VLVE, and IVAG…AYIT.

The protein localises to the membrane. Functionally, may play a role in cell differentiation in the intestinal epithelium. This chain is Proteolipid protein 2 (Plp2), found in Rattus norvegicus (Rat).